We begin with the raw amino-acid sequence, 538 residues long: Calcyphosin-2 (538 aa).

Residues 134 to 146 (RNAENTKSNVTHK) are compositionally biased toward polar residues. A disordered region spans residues 134 to 154 (RNAENTKSNVTHKQSPRNKID). EF-hand domains lie at 426 to 461 (RILT…FHLE), 462 to 497 (VSEK…EMNE), and 498 to 533 (YRKS…KKHS). Positions 439, 443, 450, 477, 479, 481, 486, 511, 513, 515, 517, and 522 each coordinate Ca(2+).

Abundantly expressed in many tissues. Expressed in brain, colon, heart, kidney, liver, lung, liver, pancreas, placenta, skeletal muscle, testis and thymus. Highest expression in colon, testis, lung, placenta and brain.

This chain is Calcyphosin-2, found in Homo sapiens (Human).